Reading from the N-terminus, the 148-residue chain is Deoxyuridine 5'-triphosphate nucleotidohydrolase (148 aa).

Substrate contacts are provided by residues 67–69, asparagine 80, 84–86, and methionine 94; these read RSG and LID.

The protein belongs to the dUTPase family. Mg(2+) serves as cofactor.

It carries out the reaction dUTP + H2O = dUMP + diphosphate + H(+). Its pathway is pyrimidine metabolism; dUMP biosynthesis; dUMP from dCTP (dUTP route): step 2/2. Functionally, this enzyme is involved in nucleotide metabolism: it produces dUMP, the immediate precursor of thymidine nucleotides and it decreases the intracellular concentration of dUTP so that uracil cannot be incorporated into DNA. The chain is Deoxyuridine 5'-triphosphate nucleotidohydrolase from Burkholderia multivorans (strain ATCC 17616 / 249).